The sequence spans 93 residues: Putative pterin-4-alpha-carbinolamine dehydratase (93 aa).

This sequence belongs to the pterin-4-alpha-carbinolamine dehydratase family.

The enzyme catalyses (4aS,6R)-4a-hydroxy-L-erythro-5,6,7,8-tetrahydrobiopterin = (6R)-L-erythro-6,7-dihydrobiopterin + H2O. This is Putative pterin-4-alpha-carbinolamine dehydratase from Chloroflexus aurantiacus (strain ATCC 29366 / DSM 635 / J-10-fl).